Reading from the N-terminus, the 255-residue chain is Probable cyclic nucleotide phosphodiesterase syc0937_d (255 aa).

Aspartate 19, histidine 21, aspartate 59, asparagine 89, histidine 157, histidine 196, and histidine 198 together coordinate Fe cation. AMP contacts are provided by residues histidine 21, aspartate 59, and 89–90 (NH). Residue histidine 198 coordinates AMP.

The protein belongs to the cyclic nucleotide phosphodiesterase class-III family. Fe(2+) is required as a cofactor.

This Synechococcus sp. (strain ATCC 27144 / PCC 6301 / SAUG 1402/1) (Anacystis nidulans) protein is Probable cyclic nucleotide phosphodiesterase syc0937_d.